Reading from the N-terminus, the 440-residue chain is Probable carboxypeptidase AFUB_072730 (440 aa).

Positions 1–16 (MKPLTSLLLSAALSAA) are cleaved as a signal peptide. N-linked (GlcNAc...) asparagine glycans are attached at residues N87 and N149. Residue D165 participates in Zn(2+) binding. Residue E197 is the Proton acceptor of the active site. A Zn(2+)-binding site is contributed by E198. N-linked (GlcNAc...) asparagine glycans are attached at residues N353 and N372.

Belongs to the peptidase M20A family. Zn(2+) serves as cofactor.

It is found in the secreted. This chain is Probable carboxypeptidase AFUB_072730, found in Aspergillus fumigatus (strain CBS 144.89 / FGSC A1163 / CEA10) (Neosartorya fumigata).